Here is a 329-residue protein sequence, read N- to C-terminus: Malate dehydrogenase 2 (329 aa).

12 to 18 lines the NAD(+) pocket; it reads GAAGQIA. Arg-93 and Arg-99 together coordinate substrate. Residues Asn-106, Gln-113, and 130-132 contribute to the NAD(+) site; that span reads VGN. Positions 132 and 163 each coordinate substrate. The active-site Proton acceptor is the His-188.

This sequence belongs to the LDH/MDH superfamily. MDH type 2 family.

The catalysed reaction is (S)-malate + NAD(+) = oxaloacetate + NADH + H(+). Catalyzes the reversible oxidation of malate to oxaloacetate. This Burkholderia thailandensis (strain ATCC 700388 / DSM 13276 / CCUG 48851 / CIP 106301 / E264) protein is Malate dehydrogenase 2.